An 857-amino-acid chain; its full sequence is uncharacterized protein (857 aa).

This is an uncharacterized protein from Bacillus subtilis (strain 168).